A 410-amino-acid chain; its full sequence is Probable inactive allantoicase (410 aa).

It belongs to the allantoicase family.

The function of this enzyme is unclear as allantoicase activity is not known to exist in mammals. This chain is Probable inactive allantoicase (ALLC), found in Macaca fascicularis (Crab-eating macaque).